The sequence spans 245 residues: AP-1-like transcription factor YAP7 (245 aa).

Positions 1 to 144 (MRQRRSVVAV…NRDAQRAYRE (144 aa)) are disordered. Residues 74 to 94 (SANNDGSSKIKKVQTSNQKDQ) show a composition bias toward polar residues. Composition is skewed to basic and acidic residues over residues 95 to 114 (MTTKDHENEGAKGHEGKSDD) and 135 to 144 (NRDAQRAYRE). The 64-residue stretch at 125–188 (VDSVEKRRRQ…SDTKENLQKS (64 aa)) folds into the bZIP domain. The segment at 130 to 149 (KRRRQNRDAQRAYRERRTTR) is basic motif. Residues 153–181 (LEEKVEMLHNLVDDWQRKYKLLESEFSDT) form a leucine-zipper region.

Belongs to the bZIP family. YAP subfamily. As to quaternary structure, homodimer.

It localises to the nucleus. Probable transcription activator linked to cell cycle that induces transcription activation of genes in the environmental stress response and metabolism control pathways, like the closely related YAP5. In Saccharomyces cerevisiae (strain ATCC 204508 / S288c) (Baker's yeast), this protein is AP-1-like transcription factor YAP7 (YAP7).